We begin with the raw amino-acid sequence, 1315 residues long: Serine-aspartate repeat-containing protein D (1315 aa).

Residues 1–35 (MLNRENKTAITRKGMVSNRLNKFSIRKYTVGTASI) form the signal peptide. A YSIRK-G/S signaling motif motif is present at residues 23–34 (FSIRKYTVGTAS). The interval 36-568 (LVGTTLIFGL…NNQSGGAGQE (533 aa)) is ligand binding A region. Residues 54 to 185 (ESTNKELNEA…NKKVDAKTES (132 aa)) are disordered. 2 stretches are compositionally biased toward polar residues: residues 62-71 (EATTSASDNQ) and 94-108 (EMVS…SNGN). Basic and acidic residues predominate over residues 130-145 (KSDEQASPKSTNEDLN). Composition is skewed to polar residues over residues 146–155 (TKQTISNQEA) and 163–173 (NKSVVNVQPTN). The span at 174–183 (EENKKVDAKT) shows a compositional bias: basic and acidic residues. CNA-B domains are found at residues 569–680 (VYKI…IYKP), 681–791 (KYNL…YKTP), 792–901 (KYNL…FYKP), 902–1012 (TYNL…YKTP), and 1013–1123 (KYSL…EEET). Disordered stretches follow at residues 857–883 (ETPS…TSTT), 972–992 (YTPT…GLTT), and 1078–1291 (EKPA…SNNA). 2 stretches are compositionally biased toward polar residues: residues 860–869 (SGYTPTQVGS) and 972–981 (YTPTSVTSGN). 4 stretches are compositionally biased toward acidic residues: residues 1091–1101 (TEDDKDADGGE), 1118–1134 (YYEE…DSDS), 1142–1164 (SDSD…DSDS), and 1172–1254 (SDSD…DSDS). The short motif at 1278–1282 (LPETG) is the LPXTG sorting signal element. Threonine 1281 carries the post-translational modification Pentaglycyl murein peptidoglycan amidated threonine. The propeptide at 1282–1315 (GNENSGSNNATLFGGLFAALGSLLLFGRRKKQNK) is removed by sortase.

This sequence belongs to the serine-aspartate repeat-containing protein (SDr) family. Interacts with host DSG1; this interaction increases S.aureus adherence to keratinocytes. Anchored to the cell wall by sortase A.

The protein resides in the secreted. Its subcellular location is the cell wall. Functionally, cell surface-associated calcium-binding protein which plays an important role in adhesion and pathogenesis. Mediates interactions with components of the extracellular matrix such as host DSG1 to promote bacterial adhesion to host cells. Contributes to the resistance to killing by innate immune components such as neutrophils present in blood and thus attenuates bacterial clearance. In Staphylococcus aureus (strain Newman), this protein is Serine-aspartate repeat-containing protein D (sdrD).